A 381-amino-acid polypeptide reads, in one-letter code: MKDFLPFSKPAIGDEEIAAVSEVLRSGWITTGPQNQALEQEFCQATGARHAIAVCSATAGMHVTLMALGIGPGDEVITPSMTWVSTLNIITLLGATPVMIDVGRDTLMVTPEAIADAITPRTKAIIPVHFAGAPVDLDPIRALAQRQGIALIEDAAHAIGTAYRGEPIGQRGTAIFSFHAIKNVTCAEGGMVVTDDDRLAQQVRSLKFHGLGVDAYDRQTHGRAPQAEVVTPGYKYNLADINAAIARVQLAKLPELNARRARLAAYYLQQLAQHQLPFSPLNTPEWPHQHAWHLFIIRCDEARSGVDRDRLMQALKERNIGSGLHFRAAHTQKYYRESYPQLRLAQTEWNSQRICSLPLFPDMTEADVDRVIAALKEIIEQ.

An N6-(pyridoxal phosphate)lysine modification is found at Lys182.

Belongs to the DegT/DnrJ/EryC1 family. ArnB subfamily. In terms of assembly, homodimer. The cofactor is pyridoxal 5'-phosphate.

It carries out the reaction UDP-4-amino-4-deoxy-beta-L-arabinose + 2-oxoglutarate = UDP-beta-L-threo-pentopyranos-4-ulose + L-glutamate. The protein operates within nucleotide-sugar biosynthesis; UDP-4-deoxy-4-formamido-beta-L-arabinose biosynthesis; UDP-4-deoxy-4-formamido-beta-L-arabinose from UDP-alpha-D-glucuronate: step 2/3. Its pathway is bacterial outer membrane biogenesis; lipopolysaccharide biosynthesis. In terms of biological role, catalyzes the conversion of UDP-4-keto-arabinose (UDP-Ara4O) to UDP-4-amino-4-deoxy-L-arabinose (UDP-L-Ara4N). The modified arabinose is attached to lipid A and is required for resistance to polymyxin and cationic antimicrobial peptides. The chain is UDP-4-amino-4-deoxy-L-arabinose--oxoglutarate aminotransferase from Edwardsiella ictaluri (strain 93-146).